Consider the following 388-residue polypeptide: Protein RecA (388 aa).

79 to 86 provides a ligand contact to ATP; the sequence is GPESSGKT. The interval 347–372 is disordered; that stretch reads IDGEEVSEQDTENKKDEPKKEEAVNE. Residues 357–369 show a composition bias toward basic and acidic residues; it reads TENKKDEPKKEEA.

The protein belongs to the RecA family.

The protein resides in the cytoplasm. In terms of biological role, can catalyze the hydrolysis of ATP in the presence of single-stranded DNA, the ATP-dependent uptake of single-stranded DNA by duplex DNA, and the ATP-dependent hybridization of homologous single-stranded DNAs. It interacts with LexA causing its activation and leading to its autocatalytic cleavage. This Streptococcus pneumoniae (strain CGSP14) protein is Protein RecA.